The following is a 369-amino-acid chain: MMKTVRIALDAMGGDFGPEVMLPGAALALERGLNIAFLLFGDEKLIKPYLAAHPALAAVATLHHTNVAVRMDDKPSQALRSGRRNSSMWLSIDAVKKNAADIAVSAGNTGALMAMAKTCLHTMPGVDRPAIAAIWPTIRGRTIVLDVGASIGADARHLVNLAIMGAAMARAVLDVERPTVGLLNIGSEEMKGVDDVKAASKLLREMALPQLDYVGFVEGGDIGRGTVDVVVTEGFSGNIALKTAEGTASQMGQYLREALSRDLMSKIGYFFARKGLATLKAKMDPRNVNGGTFLGLDGVVIKSHGHSDVFGTSVAIEIAYRIARHELLGQIRGALAHSHELASRAPNSQTAGGERAAAVPQSAQLRMDS.

Residues 342 to 369 (ASRAPNSQTAGGERAAAVPQSAQLRMDS) form a disordered region.

It belongs to the PlsX family. As to quaternary structure, homodimer. Probably interacts with PlsY.

Its subcellular location is the cytoplasm. The catalysed reaction is a fatty acyl-[ACP] + phosphate = an acyl phosphate + holo-[ACP]. It participates in lipid metabolism; phospholipid metabolism. In terms of biological role, catalyzes the reversible formation of acyl-phosphate (acyl-PO(4)) from acyl-[acyl-carrier-protein] (acyl-ACP). This enzyme utilizes acyl-ACP as fatty acyl donor, but not acyl-CoA. This chain is Phosphate acyltransferase, found in Methylocella silvestris (strain DSM 15510 / CIP 108128 / LMG 27833 / NCIMB 13906 / BL2).